The chain runs to 588 residues: Glutathione/L-cysteine transport system ATP-binding/permease protein CydD (588 aa).

Over 1–15 the chain is Cytoplasmic; it reads MNKSRQKELTRWLKQ. A run of 2 helical transmembrane segments spans residues 16–36 and 37–57; these read QSVISQRWLNISRLLGFVSGI and LIIAQAWFMARILQHMIMENI. Residues 20-306 form the ABC transmembrane type-1 domain; the sequence is SQRWLNISRL…APEFFQPLRD (287 aa). Residues 58–136 lie on the Cytoplasmic side of the membrane; sequence PREALLLPFT…LEQIDDMHDY (79 aa). The chain crosses the membrane as a helical span at residues 137–157; the sequence is YARYLPQMALAVSVPLLIVVA. Residues 158 to 161 are Periplasmic-facing; that stretch reads IFPS. Residues 162–182 form a helical membrane-spanning segment; the sequence is NWAAALILLGTAPLIPLFMAL. The Cytoplasmic portion of the chain corresponds to 183 to 249; it reads VGMGAADANR…MEVLRLAFLS (67 aa). The helical transmembrane segment at 250 to 270 threads the bilayer; sequence SGILEFFTSLSIALVAVYFGF. At 271-276 the chain is on the periplasmic side; it reads SYLGEL. The chain crosses the membrane as a helical span at residues 277–297; sequence DFGHYDTGVTLAAGFLALILA. Residues 298 to 573 lie on the Cytoplasmic side of the membrane; it reads PEFFQPLRDL…QGRYAELSVA (276 aa). Residues 339-572 form the ABC transporter domain; that stretch reads EAELASTDPV…EQGRYAELSV (234 aa). Residue 373-380 participates in ATP binding; the sequence is LPAGQRAV.

The protein belongs to the ABC transporter superfamily. Cysteine exporter (TC 3.A.1.129.1) family. Forms a heterodimer with CydC.

The protein localises to the cell inner membrane. It carries out the reaction L-cysteine(in) + ATP + H2O = L-cysteine(out) + ADP + phosphate + H(+). The catalysed reaction is glutathione(in) + ATP + H2O = glutathione(out) + ADP + phosphate + H(+). With respect to regulation, ATPase activity is stimulated by various thiol compounds. The presence of heme leads to a further enhancement of thiol-stimulated ATPase activity, although a large excess of heme inhibits activity. Glutathione transport is inhibited by sodium orthovanadate, an inhibitor of ABC-type transport systems, but not by the proton ionophore carbonyl cyanide m-chlorophenylhydrazone (CCCP). In terms of biological role, part of the ABC transporter complex CydDC that exports the reduced low-molecular-weight thiols cysteine and glutathione to the periplasm. Export of these thiol-containing redox-active molecules may be crucial for redox homeostasis in the periplasm, permitting correct assembly of various respiratory complexes and formation of correct disulfide bonds in periplasmic and secreted proteins. CydD contains transmembrane domains (TMD), which form a pore in the inner membrane, and an ATP-binding domain (NBD), which is responsible for energy generation. Required for the assembly of functional cytochrome bd-type quinol oxidases and periplasmic c-type cytochromes. Overexpression of CydDC under anaerobic conditions also results in the formation of a heme biosynthesis-derived pigment, P-574. CydDC binds heme b, but heme is probably not transported by the complex and instead has a role in regulating ATPase activity. Conversely, a more recent study suggests an alternative function of CydDC: authors suggest that CydDC does not mediate the export of L-cysteine but rather reduces cytoplasmic L-cystine to L-cysteine. The principle function of CydDC would be to maintain the reduced state of cytoplasmic L-cysteine, thereby providing an important connection between sulfur metabolism, oxidative stress and resistance to antibiotics. The sequence is that of Glutathione/L-cysteine transport system ATP-binding/permease protein CydD from Escherichia coli (strain K12).